The following is a 1020-amino-acid chain: Fanconi-associated nuclease 1 (1020 aa).

The segment covering 1–11 (MPSQRKSPDQK) has biased composition (basic and acidic residues). Residues 1-24 (MPSQRKSPDQKRPRRSLSTSKTAK) are disordered. Residues 14–22 (RRSLSTSKT) carry the D-box motif. A UBZ4-type zinc finger spans residues 41 to 69 (KLACSTCHKMVPRYDLIRHLDESCANNGV). Zn(2+) is bound by residues Cys-44, Cys-47, His-59, and Cys-64. Residues 173–208 (KNEGLASQCPQTSPSTPGTSLTDNCPEMEDKDEVLN) are disordered. A compositionally biased stretch (polar residues) spans 180-195 (QCPQTSPSTPGTSLTD). Positions 212–214 (KEN) match the KEN box motif. Positions 224 to 242 (ENASEQKVKNNKITGDESQ) are enriched in basic and acidic residues. 2 disordered regions span residues 224 to 252 (ENASEQKVKNNKITGDESQKASCGEPALT) and 269 to 288 (LVSNTKSSPGDTLVKQESAR). Positions 269–278 (LVSNTKSSPG) are enriched in polar residues. Positions 673–737 (SSRAVEVLER…AIRCIREGLA (65 aa)) form a coiled coil. Residues Glu-837, Asp-963, Glu-978, and Val-979 each contribute to the Mn(2+) site. Residues 898-1010 (AESLRAWVGE…GADVEVCHVV (113 aa)) enclose the VRR-NUC domain.

Belongs to the FAN1 family. Interacts with FANCD2 (when monoubiquitinated). Interacts with FANCI, MLH1, MLH3 and PMS2. It depends on Mn(2+) as a cofactor. Mg(2+) is required as a cofactor. Ubiquitinated and degraded during mitotic exit by the APC/C-Cdh1 complex.

It is found in the nucleus. The enzyme catalyses Hydrolytically removes 5'-nucleotides successively from the 3'-hydroxy termini of 3'-hydroxy-terminated oligonucleotides.. In terms of biological role, nuclease required for the repair of DNA interstrand cross-links (ICL) recruited at sites of DNA damage by monoubiquitinated FANCD2. Specifically involved in repair of ICL-induced DNA breaks by being required for efficient homologous recombination, probably in the resolution of homologous recombination intermediates. Not involved in DNA double-strand breaks resection. Acts as a 5'-3' exonuclease that anchors at a cut end of DNA and cleaves DNA successively at every third nucleotide, allowing to excise an ICL from one strand through flanking incisions. Probably keeps excising with 3'-flap annealing until it reaches and unhooks the ICL. Acts at sites that have a 5'-terminal phosphate anchor at a nick or a 1- or 2-nucleotide flap and is augmented by a 3' flap. Also has endonuclease activity toward 5'-flaps. This chain is Fanconi-associated nuclease 1, found in Mus musculus (Mouse).